Consider the following 134-residue polypeptide: Large ribosomal subunit protein uL14 (134 aa).

Belongs to the universal ribosomal protein uL14 family. In terms of assembly, part of the 50S ribosomal subunit. Forms a cluster with proteins L3 and L19. In the 70S ribosome, L14 and L19 interact and together make contacts with the 16S rRNA in bridges B5 and B8.

Binds to 23S rRNA. Forms part of two intersubunit bridges in the 70S ribosome. This is Large ribosomal subunit protein uL14 from Deinococcus geothermalis (strain DSM 11300 / CIP 105573 / AG-3a).